The chain runs to 1696 residues: uncharacterized protein (1696 aa).

Disordered stretches follow at residues M1–Y113, D151–R194, D258–K284, and G299–G376. Over residues L21–Q42 the composition is skewed to pro residues. Residues G52–R61 show a composition bias toward polar residues. Positions Q96 to Y113 are enriched in low complexity. Positions R170–V183 are enriched in polar residues. 3 stretches are compositionally biased toward basic and acidic residues: residues E267–K284, E325–R340, and R358–G376. S378 bears the Phosphoserine mark. 7 disordered regions span residues R419–L483, S688–P724, I1063–S1090, T1184–S1211, G1319–R1340, V1361–S1429, and S1658–M1696. Basic and acidic residues-rich tracts occupy residues L421–G436 and D695–V704. S708 carries the phosphoserine modification. The segment covering T1184–E1204 has biased composition (basic and acidic residues). Residues V1361 to Q1370 are compositionally biased toward basic and acidic residues. 3 stretches are compositionally biased toward polar residues: residues N1389–S1398, S1658–S1667, and S1677–M1696.

This is an uncharacterized protein from Arabidopsis thaliana (Mouse-ear cress).